The chain runs to 240 residues: MALKDKWQQDRIGRQQGVQERQQQVQTTLSLWQQERQNQALDDQESRQGFVTGVQQQTQELLTNISTERLWVAQQQREQLENFIQQLSQEVGEFLQQTIEERSQVAAQLHQQLSEFREDLEYRVTDLLANYQKQRLEARETLLEDLAIFRQTLYREVEEYLGELDILHQQMAAQLQQQLQQSRTERKDAVQKLFEDLGVFRAELQDYHLKLQQTVWGSSHRKPRKAITPQRSIPSRLYSC.

Positions 1–13 are enriched in basic and acidic residues; that stretch reads MALKDKWQQDRIG. Residues 1-20 form a disordered region; sequence MALKDKWQQDRIGRQQGVQE. Repeats lie at residues 18–50, 51–83, 84–116, 117–149, and 150–207; these read VQER…RQGF, VTGV…LENF, IQQL…LSEF, REDL…LAIF, and RQTL…LQDY. A 5 X 33 AA tandem repeats region spans residues 18-207; sequence VQERQQQVQT…GVFRAELQDY (190 aa).

The protein belongs to the gas vesicle GvpC family.

The protein localises to the gas vesicle. Confers stability, involved in shaping gas vesicles, hollow, gas filled proteinaceous nanostructures. During planktonic growth they allow positioning of the organism at a favorable depth for light or nutrient acquisition. In Planktothrix agardhii (Oscillatoria agardhii), this protein is Gas vesicle protein C.